We begin with the raw amino-acid sequence, 228 residues long: Phosphoglycolate phosphatase (228 aa).

The active-site Nucleophile is Asp12. The Mg(2+) site is built by Asp12, Asp14, and Asp177.

The protein belongs to the HAD-like hydrolase superfamily. CbbY/CbbZ/Gph/YieH family. Mg(2+) serves as cofactor.

The catalysed reaction is 2-phosphoglycolate + H2O = glycolate + phosphate. Its pathway is organic acid metabolism; glycolate biosynthesis; glycolate from 2-phosphoglycolate: step 1/1. In terms of biological role, specifically catalyzes the dephosphorylation of 2-phosphoglycolate. Is involved in the dissimilation of the intracellular 2-phosphoglycolate formed during the DNA repair of 3'-phosphoglycolate ends, a major class of DNA lesions induced by oxidative stress. The chain is Phosphoglycolate phosphatase from Vibrio vulnificus (strain CMCP6).